Here is a 109-residue protein sequence, read N- to C-terminus: DNA-directed RNA polymerase subunit I (109 aa).

It carries out the reaction RNA(n) + a ribonucleoside 5'-triphosphate = RNA(n+1) + diphosphate. Functionally, DNA-dependent RNA polymerase catalyzes the transcription of DNA into RNA using the four ribonucleoside triphosphates as substrates. The chain is DNA-directed RNA polymerase subunit I (rpoI) from Methanocaldococcus jannaschii (strain ATCC 43067 / DSM 2661 / JAL-1 / JCM 10045 / NBRC 100440) (Methanococcus jannaschii).